We begin with the raw amino-acid sequence, 99 residues long: Small ribosomal subunit protein bS20 (99 aa).

This sequence belongs to the bacterial ribosomal protein bS20 family.

In terms of biological role, binds directly to 16S ribosomal RNA. The polypeptide is Small ribosomal subunit protein bS20 (Caldicellulosiruptor saccharolyticus (strain ATCC 43494 / DSM 8903 / Tp8T 6331)).